The chain runs to 836 residues: Zinc fingers and homeoboxes protein 2 (836 aa).

A disordered region spans residues 24–58 (LEEADRAKDKGLGVPPSDVSKERWAAEPEPSSKES). The segment at 27 to 77 (ADRAKDKGLGVPPSDVSKERWAAEPEPSSKESEVVEVRSVGESQSKKLQGG) is interaction with EFNB1. Residues 42–58 (VSKERWAAEPEPSSKES) show a composition bias toward basic and acidic residues. C2H2-type zinc fingers lie at residues 78-101 (YECK…DMQH) and 110-133 (YVCA…SKFH). Residues 168-210 (SAPGSSDNDPGVSVGKTATVKTGKQKADAKKVPKKPDEAAPDN) are disordered. Basic and acidic residues predominate over residues 192-210 (QKADAKKVPKKPDEAAPDN). Positions 195-358 (DAKKVPKKPD…PAQLTPTKVS (164 aa)) are required for homodimerization. 4 DNA-binding regions (homeobox) span residues 263 to 324 (NTTK…WSPE), 439 to 501 (TPAS…IVHI), 530 to 591 (AQKF…EQAV), and 628 to 690 (SPSS…TLSW). Residues 263-446 (NTTKYNSALD…PLTPASDRKK (184 aa)) are required for repressor activity. The tract at residues 263-497 (NTTKYNSALD…SDHRYRCQRG (235 aa)) is required for interaction with NFYA. The interval 317–446 (HGISWSPEEV…PLTPASDRKK (130 aa)) is required for nuclear localization. Positions 404-442 (GQKRPLVTPQAAPEPKRPHIAQVPEPPPKVANTPLTPAS) are disordered. A Glycyl lysine isopeptide (Lys-Gly) (interchain with G-Cter in SUMO2) cross-link involves residue lysine 455. Composition is skewed to basic and acidic residues over residues 700–709 (SDDHGHDVAS) and 730–746 (YAKD…EKLV). Residues 700-836 (SDDHGHDVAS…DSTPAEAGQA (137 aa)) form a disordered region. Residues serine 824 and serine 826 each carry the phosphoserine modification.

It belongs to the ZHX family. As to quaternary structure, homodimer (via homeobox domain 1). Heterodimer with ZHX1 (via homeobox domain 1). Heterodimer with ZHX3 (via homeobox domain 1). Heterodimerization with ZHX1 is not necessary for repressor activity. Interacts (via homeobox domain) with NFYA (via N-terminus). Interacts with EFNB1 intracellular domain peptide; the interaction enhances ZHX2 transcriptional repression activity.

The protein localises to the nucleus. In terms of biological role, acts as a transcriptional repressor. Represses the promoter activity of the CDC25C gene stimulated by NFYA. May play a role in retinal development where it regulates the composition of bipolar cell populations, by promoting differentiation of bipolar OFF-type cells. In the brain, may promote maintenance and suppress differentiation of neural progenitor cells in the developing cortex. The chain is Zinc fingers and homeoboxes protein 2 (Zhx2) from Rattus norvegicus (Rat).